Here is a 504-residue protein sequence, read N- to C-terminus: ATP synthase subunit alpha (504 aa).

169-176 (GDRQTGKT) contributes to the ATP binding site.

Belongs to the ATPase alpha/beta chains family. In terms of assembly, F-type ATPases have 2 components, CF(1) - the catalytic core - and CF(0) - the membrane proton channel. CF(1) has five subunits: alpha(3), beta(3), gamma(1), delta(1), epsilon(1). CF(0) has three main subunits: a(1), b(2) and c(9-12). The alpha and beta chains form an alternating ring which encloses part of the gamma chain. CF(1) is attached to CF(0) by a central stalk formed by the gamma and epsilon chains, while a peripheral stalk is formed by the delta and b chains.

The protein localises to the cell membrane. The catalysed reaction is ATP + H2O + 4 H(+)(in) = ADP + phosphate + 5 H(+)(out). In terms of biological role, produces ATP from ADP in the presence of a proton gradient across the membrane. The alpha chain is a regulatory subunit. This chain is ATP synthase subunit alpha, found in Clostridium botulinum (strain Loch Maree / Type A3).